A 34-amino-acid chain; its full sequence is MSDIN-like toxin proprotein 3 (34 aa).

A propeptide spanning residues 1 to 10 (MSDINVIRAP) is cleaved from the precursor. Positions 11-18 (LLILSILP) form a cross-link, cyclopeptide (Leu-Pro). A propeptide spanning residues 19-34 (CVGDDIEVLRRGEGLS) is cleaved from the precursor.

The protein belongs to the MSDIN fungal toxin family. Post-translationally, processed by the macrocyclase-peptidase enzyme POPB to yield a toxic cyclic octapeptide. POPB first removes 10 residues from the N-terminus. Conformational trapping of the remaining peptide forces the enzyme to release this intermediate rather than proceed to macrocyclization. The enzyme rebinds the remaining peptide in a different conformation and catalyzes macrocyclization of the N-terminal 8 residues. Expressed in basidiocarps.

Probable toxin that belongs to the MSDIN-like toxin family responsible for a large number of food poisoning cases and deaths. The polypeptide is MSDIN-like toxin proprotein 3 (Amanita exitialis (Guangzhou destroying angel)).